A 96-amino-acid polypeptide reads, in one-letter code: uncharacterized protein (96 aa).

The signal sequence occupies residues 1-21 (MLASVLILGAIAVGSAIPTIA).

This is an uncharacterized protein from Archaeoglobus fulgidus (strain ATCC 49558 / DSM 4304 / JCM 9628 / NBRC 100126 / VC-16).